A 332-amino-acid polypeptide reads, in one-letter code: Holliday junction branch migration complex subunit RuvB (332 aa).

Residues 1–182 (MNKNFIESNL…FAFTCRLEYY (182 aa)) form a large ATPase domain (RuvB-L) region. ATP-binding positions include Leu21, Arg22, Gly63, Lys66, Thr67, Thr68, 129-131 (EDF), Arg172, Tyr182, and Arg219. Thr67 lines the Mg(2+) pocket. The interval 183–253 (DPMILQKILL…VANRALTMLS (71 aa)) is small ATPAse domain (RuvB-S). Residues 256–332 (EKGLDEMDKK…YQHIVGSSQR (77 aa)) are head domain (RuvB-H). Residues Arg311 and Arg316 each coordinate DNA.

It belongs to the RuvB family. In terms of assembly, homohexamer. Forms an RuvA(8)-RuvB(12)-Holliday junction (HJ) complex. HJ DNA is sandwiched between 2 RuvA tetramers; dsDNA enters through RuvA and exits via RuvB. An RuvB hexamer assembles on each DNA strand where it exits the tetramer. Each RuvB hexamer is contacted by two RuvA subunits (via domain III) on 2 adjacent RuvB subunits; this complex drives branch migration. In the full resolvosome a probable DNA-RuvA(4)-RuvB(12)-RuvC(2) complex forms which resolves the HJ.

It localises to the cytoplasm. It carries out the reaction ATP + H2O = ADP + phosphate + H(+). Functionally, the RuvA-RuvB-RuvC complex processes Holliday junction (HJ) DNA during genetic recombination and DNA repair, while the RuvA-RuvB complex plays an important role in the rescue of blocked DNA replication forks via replication fork reversal (RFR). RuvA specifically binds to HJ cruciform DNA, conferring on it an open structure. The RuvB hexamer acts as an ATP-dependent pump, pulling dsDNA into and through the RuvAB complex. RuvB forms 2 homohexamers on either side of HJ DNA bound by 1 or 2 RuvA tetramers; 4 subunits per hexamer contact DNA at a time. Coordinated motions by a converter formed by DNA-disengaged RuvB subunits stimulates ATP hydrolysis and nucleotide exchange. Immobilization of the converter enables RuvB to convert the ATP-contained energy into a lever motion, pulling 2 nucleotides of DNA out of the RuvA tetramer per ATP hydrolyzed, thus driving DNA branch migration. The RuvB motors rotate together with the DNA substrate, which together with the progressing nucleotide cycle form the mechanistic basis for DNA recombination by continuous HJ branch migration. Branch migration allows RuvC to scan DNA until it finds its consensus sequence, where it cleaves and resolves cruciform DNA. The chain is Holliday junction branch migration complex subunit RuvB from Protochlamydia amoebophila (strain UWE25).